The primary structure comprises 360 residues: MISTVVWGTGNVGRLAIRAVEAHPALQLCAVIVHNPAKVGRDAGELGELDRLLGVEATDDIEAVLAARPRAVVYAASGDVRPDEALADITRAVRSGAVVVSPALYPLYDHRNAPPEFRDPVLAAVTEGGGSLFASGVDPGWGNDVLPLLLSGLGTTIDVIRCQEIFDYSTYDQPDSVRYLVGMGQPMDYEPMMLMPSIPTMVWGGQIRMMARALGVELDEIRETSDRRALDTTVTTRTMGEFGAGTQGAIRFEVQGIVEGEPRIVIEHVTRIHPSCAPDWPVPPDGGDGAHRVVIEGRPRIEVTIEATDEGENRSAGGNATAVGRLVGAIDWLVEAEPGLYDALDIPLRPAIGRLGRKQS.

Belongs to the amine dehydrogenase family. As to quaternary structure, homodimer.

The catalysed reaction is a secondary alkyl amine + NAD(+) + H2O = a ketone + NH4(+) + NADH + H(+). It carries out the reaction a secondary alkyl amine + NADP(+) + H2O = a ketone + NH4(+) + NADPH + H(+). The enzyme catalyses serinol + NAD(+) + H2O = dihydroxyacetone + NH4(+) + NADH + H(+). It catalyses the reaction serinol + NADP(+) + H2O = dihydroxyacetone + NH4(+) + NADPH + H(+). The catalysed reaction is 2-aminopropan-1-ol + NAD(+) + H2O = hydroxyacetone + NH4(+) + NADH + H(+). It carries out the reaction (R)-1-phenylethylamine + NAD(+) + H2O = acetophenone + NH4(+) + NADH + H(+). The enzyme catalyses (S)-1-phenylethylamine + NAD(+) + H2O = acetophenone + NH4(+) + NADH + H(+). It catalyses the reaction (2S)-2-aminobutan-1-ol + NAD(+) + H2O = 1-hydroxy-2-butanone + NH4(+) + NADH + H(+). The catalysed reaction is (2S)-2-amino-3-methylbutan-1-ol + NAD(+) + H2O = 1-hydroxy-3-methylbutan-2-one + NH4(+) + NADH + H(+). It carries out the reaction 2-aminopentan-1-ol + NAD(+) + H2O = 1-hydroxypentan-2-one + NH4(+) + NADH + H(+). The enzyme catalyses (S)-leucinol + NAD(+) + H2O = 1-hydroxy-4-methylpentan-2-one + NH4(+) + NADH + H(+). It catalyses the reaction (S)-isoleucinol + NAD(+) + H2O = (3S)-1-hydroxy-3-methylpentan-2-one + NH4(+) + NADH + H(+). The catalysed reaction is (S)-methioninol + NAD(+) + H2O = 1-hydroxy-4-(methythio)butan-2-one + NH4(+) + NADH + H(+). It carries out the reaction 2-aminocyclohexanol + NAD(+) + H2O = 2-hydroxycyclohexan-1-one + NH4(+) + NADH + H(+). The enzyme catalyses L-alanine + NAD(+) + H2O = pyruvate + NH4(+) + NADH + H(+). It catalyses the reaction D-alanine + NAD(+) + H2O = pyruvate + NH4(+) + NADH + H(+). The catalysed reaction is L-aspartate + NAD(+) + H2O = oxaloacetate + NH4(+) + NADH + H(+). It carries out the reaction D-aspartate + NAD(+) + H2O = oxaloacetate + NH4(+) + NADH + H(+). The enzyme catalyses L-glutamate + NAD(+) + H2O = 2-oxoglutarate + NH4(+) + NADH + H(+). It catalyses the reaction D-glutamate + NAD(+) + H2O = 2-oxoglutarate + NH4(+) + NADH + H(+). The catalysed reaction is L-serine + NAD(+) + H2O = 3-hydroxypyruvate + NH4(+) + NADH + H(+). It carries out the reaction D-serine + NAD(+) + H2O = 3-hydroxypyruvate + NH4(+) + NADH + H(+). The enzyme catalyses methylamine + NAD(+) + H2O = formaldehyde + NH4(+) + NADH + H(+). It catalyses the reaction ethylamine + NAD(+) + H2O = acetaldehyde + NH4(+) + NADH + H(+). The catalysed reaction is propylamine + NAD(+) + H2O = propanal + NH4(+) + NADH + H(+). It carries out the reaction butylamine + NAD(+) + H2O = butanal + NH4(+) + NADH + H(+). The enzyme catalyses hexylamine + NAD(+) + H2O = hexanal + NH4(+) + NADH + H(+). It catalyses the reaction octylamine + NAD(+) + H2O = octanal + NH4(+) + NADH + H(+). The catalysed reaction is (R)-sec-butylamine + NAD(+) + H2O = butan-2-one + NH4(+) + NADH + H(+). It carries out the reaction (S)-sec-butylamine + NAD(+) + H2O = butan-2-one + NH4(+) + NADH + H(+). The enzyme catalyses 2-aminopentane + NAD(+) + H2O = pentan-2-one + NH4(+) + NADH + H(+). It catalyses the reaction 3-aminopentane + NAD(+) + H2O = pentan-3-one + NH4(+) + NADH + H(+). The catalysed reaction is (2R)-heptan-2-amine + NAD(+) + H2O = heptan-2-one + NH4(+) + NADH + H(+). It carries out the reaction (2S)-heptan-2-amine + NAD(+) + H2O = heptan-2-one + NH4(+) + NADH + H(+). The enzyme catalyses benzylamine + NAD(+) + H2O = benzaldehyde + NH4(+) + NADH + H(+). It catalyses the reaction 3-aminobutan-2-ol + NAD(+) + H2O = acetoin + NH4(+) + NADH + H(+). The catalysed reaction is 3-aminobutan-1-ol + NAD(+) + H2O = 4-hydroxybutan-2-one + NH4(+) + NADH + H(+). It carries out the reaction 5-hydroxypentan-2-amine + NAD(+) + H2O = 5-hydroxypentan-2-one + NH4(+) + NADH + H(+). The enzyme catalyses 4-hydroxyhexan-3-amine + NAD(+) + H2O = 4-hydroxyhexan-3-one + NH4(+) + NADH + H(+). It catalyses the reaction 5-hydroxyoctan-4-amine + NAD(+) + H2O = 5-hydroxyoctan-4-one + NH4(+) + NADH + H(+). The catalysed reaction is 2-hydroxy-1-phenylethan-1-amine + NAD(+) + H2O = 2-hydroxyacetophenone + NH4(+) + NADH + H(+). It carries out the reaction hexan-2-amine + NAD(+) + H2O = hexan-2-one + NH4(+) + NADH + H(+). The enzyme catalyses 4-phenylbutan-2-amine + NAD(+) + H2O = 4-phenylbutan-2-one + NH4(+) + NADH + H(+). Functionally, catalyzes the reversible oxidative deaminations of a broad range of amines, amino alcohols and amino acids. Catalyzes the reversible dehydrogenation of serinol in the presence of NAD(+) to give dihydroxyacetone, ammonium ion and NADH, while NADP(+) shows a slight activity. Is also able to produce 2-amino-1-propanol and aspartate by the reductive amination of the corresponding keto alcohol (hydroxyacetone) and keto acid (oxaloacetate) in the presence of ammonium ions and NADH, and that of acetophenone from phenylethylamine by the oxidative deamination in the presence of NAD(+). This Streptomyces virginiae (Streptomyces cinnamonensis) protein is Amine dehydrogenase.